A 974-amino-acid chain; its full sequence is Zinc finger protein 280D (974 aa).

Residues Lys-44, Lys-46, Lys-86, Lys-99, Lys-138, Lys-201, Lys-222, Lys-245, Lys-287, and Lys-304 each participate in a glycyl lysine isopeptide (Lys-Gly) (interchain with G-Cter in SUMO2) cross-link. Positions 188 to 216 (KRPSGSDISSVNPKKPKPSENTSGIDASS) are disordered. 2 C2H2-type zinc fingers span residues 333–355 (FKCF…MKHH) and 370–393 (TTCQ…ESTH). The segment at 400–424 (TICKICELSFETEQILLQHMKDNHK) adopts a C2H2-type 3; degenerate zinc-finger fold. C2H2-type zinc fingers lie at residues 430-453 (YICQ…RTSH) and 459-481 (LLCP…YMKH). Disordered regions lie at residues 507 to 624 (TQHH…KVNT), 751 to 797 (IKTE…EGTG), and 815 to 974 (VTVS…EERS). Residues 539–557 (SGSSVTPSISPSTSTLQLS) are compositionally biased toward low complexity. The residue at position 557 (Ser-557) is a Phosphoserine. Over residues 571–587 (KLTTSTPNTTISDPSKA) the composition is skewed to polar residues. The segment covering 591 to 611 (KSNGSKSKNKSKVSNMQKKQS) has biased composition (low complexity). A compositionally biased stretch (polar residues) spans 612-624 (TLSSSNKKSKVNT). Residue Lys-752 forms a Glycyl lysine isopeptide (Lys-Gly) (interchain with G-Cter in SUMO2) linkage. The segment covering 763–775 (VSKETARHSRAEG) has biased composition (basic and acidic residues). Residues 817–829 (VSDTENVSSSKNI) are compositionally biased toward polar residues. The span at 830–860 (LSHDPDVGTDTMEKEEKTHHACQEMELKVDQ) shows a compositional bias: basic and acidic residues. Residues 861–884 (SSESTNPTEAELSSETRQGLQLTS) show a composition bias toward polar residues. Residues Ser-904 and Ser-907 each carry the phosphoserine modification. Polar residues predominate over residues 938–950 (SANTSDTVSDQTG).

It is found in the nucleus. Its function is as follows. May function as a transcription factor. The protein is Zinc finger protein 280D (Znf280d) of Mus musculus (Mouse).